Here is a 409-residue protein sequence, read N- to C-terminus: LIM/homeobox protein ttx-3 (409 aa).

2 consecutive LIM zinc-binding domains span residues N108 to K169 and C171 to T232. Disordered regions lie at residues A245 to F299 and M372 to L409. Residues V247–Q267 show a composition bias toward pro residues. Positions S292 to L351 form a DNA-binding region, homeobox. Positions G382–L409 are enriched in polar residues.

As to expression, expressed in the AIA, AIN and AIY interneurons, and in the NSM neurons. Expressed also in ADL and ASI sensory neurons in 60-70% of L2 larvae. Expression is also detected in head muscles of embryos and some early larvae but not late larvae or adults.

It is found in the nucleus. Its subcellular location is the perikaryon. It localises to the cell projection. The protein localises to the axon. Transcription factor. Binds to a sequence motif, 5'-TTATTGGCTTCGTTAA-3', which may be involved in AIY interneuron function, in the regulatory elements of target genes; binding is more efficient, in vitro, together with homeobox protein ceh-10. Required for specification of the AIA and AIY interneurons and the NSM neurons. Positively regulates the expression of a number of genes including ceh-10, ceh-23, kal-1, hen-1, ser-2, unc-17 and sra-11 in AIY neurons, and cat-4, flp-4, bas-1, ptps-1 and mgl-1 in NSM neurons. In concert with WNT/beta-catenin signaling, initiates expression of homeobox ceh-10 in AIY, but not in the sister cells, SMDD motor neurons. Also acts in an autoregulatory feedback loop to maintain its own expression. Plays a role in the thermotactic response, olfactory imprinting, regulation of longevity, control of dauer formation and axon outgrowth and pathfinding. Not required for normal chemosensory behavior. The polypeptide is LIM/homeobox protein ttx-3 (Caenorhabditis elegans).